Reading from the N-terminus, the 506-residue chain is Maturase K (506 aa).

Belongs to the intron maturase 2 family. MatK subfamily.

The protein resides in the plastid. Its subcellular location is the chloroplast. In terms of biological role, usually encoded in the trnK tRNA gene intron. Probably assists in splicing its own and other chloroplast group II introns. This chain is Maturase K, found in Calluna vulgaris (Heather).